The following is a 92-amino-acid chain: Small ribosomal subunit protein uS19 (92 aa).

The protein belongs to the universal ribosomal protein uS19 family.

Its function is as follows. Protein S19 forms a complex with S13 that binds strongly to the 16S ribosomal RNA. This Pectobacterium atrosepticum (strain SCRI 1043 / ATCC BAA-672) (Erwinia carotovora subsp. atroseptica) protein is Small ribosomal subunit protein uS19.